A 253-amino-acid chain; its full sequence is Acetylglutamate kinase (253 aa).

Residues 37-38 (GG), R59, and N149 each bind substrate.

Belongs to the acetylglutamate kinase family. ArgB subfamily.

The protein resides in the cytoplasm. It carries out the reaction N-acetyl-L-glutamate + ATP = N-acetyl-L-glutamyl 5-phosphate + ADP. It participates in amino-acid biosynthesis; L-arginine biosynthesis; N(2)-acetyl-L-ornithine from L-glutamate: step 2/4. In terms of biological role, catalyzes the ATP-dependent phosphorylation of N-acetyl-L-glutamate. In Rubrobacter xylanophilus (strain DSM 9941 / JCM 11954 / NBRC 16129 / PRD-1), this protein is Acetylglutamate kinase.